The following is a 242-amino-acid chain: UPF0273 protein TM_0370 (242 aa).

Residues 3–242 (KRVKTGIPGM…IYPSEGGEGR (240 aa)) form the KaiC domain. Residue 30 to 37 (GGPGTGKT) participates in ATP binding.

It belongs to the UPF0273 family.

The chain is UPF0273 protein TM_0370 from Thermotoga maritima (strain ATCC 43589 / DSM 3109 / JCM 10099 / NBRC 100826 / MSB8).